The sequence spans 567 residues: MSFFLRLAALLLLHTSIAQASHCPDWSTKQARTEVAQLRATLANWDDHYHRQGIALVADELYDQARHHLLHLQQCFGQEFTDPSPLASARGPIAHPVAHTGVEKLHDAAAVARWMTGKKGVWVQPKVDGVAVSLVYRQGRLVQLLSRGDGLQGHDWSRHIKDLDSITRQLPQPLDVVLQGELYLRLQAHVQAEAGSSNVRGTVAGMLARKQLGPEPGASIGLFVWDWPHGPDNQGERLTQLAAWGFPDSQRFSTAIDTPEEATHWRLHWYRSPLPFATDGVILRQDSRPPADRWQPNAPYWIAAWKYPFAQALAEVREVRFLIGRTGKVTPLLRLKPVTLDDRRISQVSLGSLARWRALDIRPGDQVAISLAGLTIPRFDQVVHRAVERQVLPVPEAEQYGQHSCWQASDGCQEQFIARLVWLSGKQGLAMPGTGKGTWKRLVQAGLVTSLTDWLTLDAQQLLSVPGISRKTATQLQRSFDIGRNRPFAQWRKGLGVPAPAQVPRDENWQTLAGRSASDWQTLPGIGATRATQLANFFTHEQVQRIATLLGTRGIDGFHGTDDVGSQ.

The active-site N6-AMP-lysine intermediate is the lysine 126.

This sequence belongs to the NAD-dependent DNA ligase family. LigB subfamily.

It carries out the reaction NAD(+) + (deoxyribonucleotide)n-3'-hydroxyl + 5'-phospho-(deoxyribonucleotide)m = (deoxyribonucleotide)n+m + AMP + beta-nicotinamide D-nucleotide.. In terms of biological role, catalyzes the formation of phosphodiester linkages between 5'-phosphoryl and 3'-hydroxyl groups in double-stranded DNA using NAD as a coenzyme and as the energy source for the reaction. The polypeptide is DNA ligase B (Pseudomonas putida (strain W619)).